Consider the following 410-residue polypeptide: Arginine deiminase (410 aa).

Cys400 acts as the Amidino-cysteine intermediate in catalysis.

The protein belongs to the arginine deiminase family.

The protein resides in the cytoplasm. It carries out the reaction L-arginine + H2O = L-citrulline + NH4(+). Its pathway is amino-acid degradation; L-arginine degradation via ADI pathway; carbamoyl phosphate from L-arginine: step 1/2. The sequence is that of Arginine deiminase from Levilactobacillus brevis (strain ATCC 367 / BCRC 12310 / CIP 105137 / JCM 1170 / LMG 11437 / NCIMB 947 / NCTC 947) (Lactobacillus brevis).